The following is a 304-amino-acid chain: Probable phytol kinase 2, chloroplastic (304 aa).

Residues 1–59 constitute a chloroplast transit peptide; that stretch reads MVSLISAHLLSLPSSAPRSRPQSRPPLSPPAAAAAASCSFDLPRPRRLVADGSRRKGTM. The next 7 helical transmembrane spans lie at 68-88, 113-133, 134-154, 170-190, 194-214, 231-251, and 256-276; these read SGLA…LALL, IGMV…APFL, AAVA…GVMK, ELLK…SIFW, PIAI…DIVG, AGSI…MHYF, and FIEE…TAAL.

The protein belongs to the polyprenol kinase family.

It localises to the plastid. It is found in the chloroplast membrane. It catalyses the reaction phytol + CTP = phytyl phosphate + CDP + H(+). Its pathway is cofactor biosynthesis; tocopherol biosynthesis. Its function is as follows. Involved in the activation and reutilization of phytol from chlorophyll degradation in plant metabolism, including tocopherol biosynthesis. Catalyzes the conversion of phytol to phytol monophosphate (PMP). This is Probable phytol kinase 2, chloroplastic from Oryza sativa subsp. japonica (Rice).